We begin with the raw amino-acid sequence, 289 residues long: Protease HtpX (289 aa).

2 helical membrane passes run 4 to 24 (IMLF…VLNI) and 36 to 56 (LSGL…ISLM). His-143 contacts Zn(2+). Glu-144 is an active-site residue. His-147 is a Zn(2+) binding site. The next 2 helical transmembrane spans lie at 158-178 (LMQG…ANIV) and 192-212 (MVYF…ASFL). Glu-221 is a Zn(2+) binding site.

This sequence belongs to the peptidase M48B family. It depends on Zn(2+) as a cofactor.

The protein resides in the cell inner membrane. The protein is Protease HtpX of Vibrio campbellii (strain ATCC BAA-1116).